The following is a 364-amino-acid chain: Aspartate aminotransferase (364 aa).

Residues Gly-23, Trp-99, and Asn-143 each coordinate L-aspartate. Lys-200 is subject to N6-(pyridoxal phosphate)lysine. Arg-320 contributes to the L-aspartate binding site.

Belongs to the class-I pyridoxal-phosphate-dependent aminotransferase family. As to quaternary structure, homodimer. The cofactor is pyridoxal 5'-phosphate.

Its subcellular location is the cytoplasm. It carries out the reaction L-aspartate + 2-oxoglutarate = oxaloacetate + L-glutamate. In Thermococcus kodakarensis (strain ATCC BAA-918 / JCM 12380 / KOD1) (Pyrococcus kodakaraensis (strain KOD1)), this protein is Aspartate aminotransferase (aspC).